Here is a 594-residue protein sequence, read N- to C-terminus: Cytoplasmic polyadenylation element-binding protein 2 (594 aa).

The span at 72–90 (KEREKVDEEKEGVERREEN) shows a compositional bias: basic and acidic residues. 2 disordered regions span residues 72–91 (KERE…EENG) and 367–388 (GGGF…STSE). A compositionally biased stretch (gly residues) spans 367–378 (GGGFNSGSGSGN). An RRM domain is found at 458–540 (LVAFIGGVPR…KRVEIKPYFF (83 aa)).

Cytoplasmic polyadenylation element binding protein that binds to and regulates the translation of specific mRNAs. This chain is Cytoplasmic polyadenylation element-binding protein 2 (cpb-2), found in Caenorhabditis japonica.